Reading from the N-terminus, the 286-residue chain is ATP synthase gamma chain (286 aa).

This sequence belongs to the ATPase gamma chain family. In terms of assembly, F-type ATPases have 2 components, CF(1) - the catalytic core - and CF(0) - the membrane proton channel. CF(1) has five subunits: alpha(3), beta(3), gamma(1), delta(1), epsilon(1). CF(0) has three main subunits: a, b and c.

It localises to the cell inner membrane. Its function is as follows. Produces ATP from ADP in the presence of a proton gradient across the membrane. The gamma chain is believed to be important in regulating ATPase activity and the flow of protons through the CF(0) complex. This is ATP synthase gamma chain from Dechloromonas aromatica (strain RCB).